An 836-amino-acid polypeptide reads, in one-letter code: Zinc fingers and homeoboxes protein 2 (836 aa).

The tract at residues 1–61 is disordered; it reads MASKRKSTTP…EHSSKETEVV (61 aa). Residues 8–19 are compositionally biased toward polar residues; the sequence is TTPCMVRTSQVL. The interval 27 to 77 is interaction with EFNB1; it reads ADRAKDKGAGMPQSDVTKDSWAAEPEHSSKETEVVEVKSMGENLSKKLQGG. The span at 50–61 shows a compositional bias: basic and acidic residues; the sequence is EPEHSSKETEVV. Lysine 64 participates in a covalent cross-link: Glycyl lysine isopeptide (Lys-Gly) (interchain with G-Cter in SUMO2). C2H2-type zinc fingers lie at residues 78–101 and 110–133; these read YECKYCPYSTQNLNEFTEHVDMQH and YVCAECNFTTKKYDSLSDHNSKFH. A disordered region spans residues 164–214; that stretch reads PITASGPGSSDNDPGVSVGKTPMTKTGKLKADAKKVPKKPDEAAPENHMEG. A compositionally biased stretch (basic and acidic residues) spans 192 to 214; the sequence is LKADAKKVPKKPDEAAPENHMEG. The required for homodimerization stretch occupies residues 195 to 358; sequence DAKKVPKKPD…PAQLTPTKVS (164 aa). DNA-binding regions (homeobox) lie at residues 263–324, 439–501, 530–591, and 628–690; these read NTTK…WSPE, TPAS…IVHI, PQKF…EQAV, and SPSS…TLSW. A required for repressor activity region spans residues 263–446; sequence NTTKYNSALD…PLTPASDRKK (184 aa). Residues 263–497 are required for interaction with NFYA; the sequence is NTTKYNSALD…SDHRYRCQRG (235 aa). The required for nuclear localization stretch occupies residues 317 to 446; that stretch reads HGISWSPEEV…PLTPASDRKK (130 aa). Residues 404–442 are disordered; it reads GQKRPLVTPQAAPEPKRPHIAQVPEPPPKVANTPLTPAS. Lysine 455 participates in a covalent cross-link: Glycyl lysine isopeptide (Lys-Gly) (interchain with G-Cter in SUMO2). 3 stretches are compositionally biased toward basic and acidic residues: residues 699-709, 730-746, and 813-824; these read MSDDRGRDAVS, YAKDPKALSEEDSEKLV, and RVAEGTVERADS. The disordered stretch occupies residues 699 to 836; that stretch reads MSDDRGRDAV…DSTPAEAGQA (138 aa). Phosphoserine occurs at positions 824 and 826.

This sequence belongs to the ZHX family. In terms of assembly, homodimer (via homeobox domain 1). Heterodimer with ZHX1 (via homeobox domain 1). Heterodimer with ZHX3 (via homeobox domain 1). Heterodimerization with ZHX1 is not necessary for repressor activity. Interacts (via homeobox domain) with NFYA (via N-terminus). Interacts with EFNB1 intracellular domain peptide; the interaction enhances ZHX2 transcriptional repression activity. As to expression, expressed in retina where it localizes to Muller glial cells of the inner nuclear layer (at protein level). Detected in heart, brain, spleen, lung, liver, skeletal muscle, kidney and testis.

Its subcellular location is the nucleus. Functionally, acts as a transcriptional repressor. Represses the promoter activity of the CDC25C gene stimulated by NFYA. May play a role in retinal development where it regulates the composition of bipolar cell populations, by promoting differentiation of bipolar OFF-type cells. In the brain, may promote maintenance and suppress differentiation of neural progenitor cells in the developing cortex. This chain is Zinc fingers and homeoboxes protein 2 (Zhx2), found in Mus musculus (Mouse).